Reading from the N-terminus, the 432-residue chain is MSGRDGGERTPLLEAHSLTTSDCAAGAPDPSRCLKTEASQVMAETGEGYFEAVALPPPQLPEEESAPSTAPSDPGCAGTFQIRAGGDGGYVVPEARLEPAPPPTESLETASVSLATDDSLGNGCQPGEPQGLSREKPLETCGAEKLGSDLMAEAKAEEVKTEEGPVFSVAVDEEVVGKEGAKEEEGVEQGMEVEERPVGEEIEMVENRVVEEAGHRPLRMDLRMNPLEAIQLELDSVNAQADRAFQQLEHKFGRMRRHYLERRNYIIQNIPGFWVTAFRNHPQLSPMIRGQDAEMLRYITNLEVKELRHPRTGCKFKFFFRRNPYFRNKLIVKEYEVRASGRVVSLSTPIIWRRGHEPQSFIRRNQEVVCNFFTWFSDHSLPESDRIAEIIKEDLWPNPLQYYLLREGVRRARRRPIREPVEIPRPFGFQSG.

Disordered regions lie at residues 1–31 (MSGRDGGERTPLLEAHSLTTSDCAAGAPDPS), 54–110 (ALPP…LETA), and 116–135 (TDDSLGNGCQPGEPQGLSRE). Lysine 160 is covalently cross-linked (Glycyl lysine isopeptide (Lys-Gly) (interchain with G-Cter in SUMO2)).

Belongs to the nucleosome assembly protein (NAP) family. Post-translationally, ubiquitinated by the CRL2(APPBP2) complex, which recognizes the Arg-Xaa-Xaa-Gly sequence at the C-terminus, leading to its degradation.

It is found in the nucleus. Its subcellular location is the nucleolus. The protein is Testis-specific Y-encoded-like protein 1 (TSPYL1) of Bos taurus (Bovine).